Consider the following 172-residue polypeptide: MVDKLKSYTKEDLIASGRSELFGENGPPLPSGNMLMMDRIIEMTENGGTHDKGYIEAELDITPDLWFFDCHFIDDPVMPGCLGLDAMWQLVGFFLGWLGGEGKGRALGVGEVKFTGQVLPTAKKVTYRINFKRVINRKLIMGLADGEVLVDGKIIYTATDLKVGLFKDTSAF.

His-71 is a catalytic residue.

It belongs to the thioester dehydratase family. FabA subfamily. In terms of assembly, homodimer.

Its subcellular location is the cytoplasm. It catalyses the reaction a (3R)-hydroxyacyl-[ACP] = a (2E)-enoyl-[ACP] + H2O. It carries out the reaction (3R)-hydroxydecanoyl-[ACP] = (2E)-decenoyl-[ACP] + H2O. The catalysed reaction is (2E)-decenoyl-[ACP] = (3Z)-decenoyl-[ACP]. It functions in the pathway lipid metabolism; fatty acid biosynthesis. Functionally, necessary for the introduction of cis unsaturation into fatty acids. Catalyzes the dehydration of (3R)-3-hydroxydecanoyl-ACP to E-(2)-decenoyl-ACP and then its isomerization to Z-(3)-decenoyl-ACP. Can catalyze the dehydratase reaction for beta-hydroxyacyl-ACPs with saturated chain lengths up to 16:0, being most active on intermediate chain length. The polypeptide is 3-hydroxydecanoyl-[acyl-carrier-protein] dehydratase (Photorhabdus laumondii subsp. laumondii (strain DSM 15139 / CIP 105565 / TT01) (Photorhabdus luminescens subsp. laumondii)).